Consider the following 314-residue polypeptide: Methionyl-tRNA formyltransferase (314 aa).

Ser112 to Pro115 provides a ligand contact to (6S)-5,6,7,8-tetrahydrofolate.

This sequence belongs to the Fmt family.

The catalysed reaction is L-methionyl-tRNA(fMet) + (6R)-10-formyltetrahydrofolate = N-formyl-L-methionyl-tRNA(fMet) + (6S)-5,6,7,8-tetrahydrofolate + H(+). Its function is as follows. Attaches a formyl group to the free amino group of methionyl-tRNA(fMet). The formyl group appears to play a dual role in the initiator identity of N-formylmethionyl-tRNA by promoting its recognition by IF2 and preventing the misappropriation of this tRNA by the elongation apparatus. The sequence is that of Methionyl-tRNA formyltransferase from Legionella pneumophila (strain Corby).